The chain runs to 66 residues: Large ribosomal subunit protein bL31 (66 aa).

Residues Cys16, Cys18, Cys36, and Cys39 each contribute to the Zn(2+) site.

This sequence belongs to the bacterial ribosomal protein bL31 family. Type A subfamily. Part of the 50S ribosomal subunit. Zn(2+) serves as cofactor.

Functionally, binds the 23S rRNA. The sequence is that of Large ribosomal subunit protein bL31 from Trichlorobacter lovleyi (strain ATCC BAA-1151 / DSM 17278 / SZ) (Geobacter lovleyi).